A 600-amino-acid chain; its full sequence is Cytidine monophosphate-N-acetylneuraminic acid hydroxylase (600 aa).

In terms of domain architecture, Rieske spans 9–107 (LSPVEVASLK…VEMDENNRLL (99 aa)). Positions 49, 51, 70, and 73 each coordinate [2Fe-2S] cluster.

It belongs to the CMP-Neu5Ac hydroxylase family. Requires [2Fe-2S] cluster as cofactor.

Its subcellular location is the cytoplasm. It catalyses the reaction CMP-N-acetyl-beta-neuraminate + 2 Fe(II)-[cytochrome b5] + O2 + 2 H(+) = CMP-N-glycoloyl-beta-neuraminate + 2 Fe(III)-[cytochrome b5] + H2O. The protein operates within amino-sugar metabolism; N-acetylneuraminate metabolism. Sialic acids are components of carbohydrate chains of glycoconjugates and are involved in cell-cell recognition and cell-pathogen interactions. Catalyzes the conversion of CMP-N-acetylneuraminic acid (CMP-Neu5Ac) into its hydroxylated derivative CMP-N-glycolylneuraminic acid (CMP-Neu5Gc), a sialic acid abundantly expressed at the surface of many cells. This chain is Cytidine monophosphate-N-acetylneuraminic acid hydroxylase (CMAH), found in Pan paniscus (Pygmy chimpanzee).